The following is a 229-amino-acid chain: Heptaprenylglyceryl phosphate synthase (229 aa).

Residue K12 coordinates sn-glycerol 1-phosphate. Residues D14 and S40 each coordinate Mg(2+). Residues Y159–G164, G189, and G209–N210 contribute to the sn-glycerol 1-phosphate site.

The protein belongs to the GGGP/HepGP synthase family. Group I subfamily. As to quaternary structure, homodimer. It depends on Mg(2+) as a cofactor.

The catalysed reaction is sn-glycerol 1-phosphate + all-trans-heptaprenyl diphosphate = 3-heptaprenyl-sn-glycero-1-phosphate + diphosphate. It participates in membrane lipid metabolism; glycerophospholipid metabolism. Functionally, prenyltransferase that catalyzes in vivo the transfer of the heptaprenyl moiety of heptaprenyl pyrophosphate (HepPP; 35 carbon atoms) to the C3 hydroxyl of sn-glycerol-1-phosphate (G1P), producing heptaprenylglyceryl phosphate (HepGP). This reaction is an ether-bond-formation step in the biosynthesis of archaea-type G1P-based membrane lipids found in Bacillales. This chain is Heptaprenylglyceryl phosphate synthase, found in Bacillus anthracis (strain A0248).